A 484-amino-acid polypeptide reads, in one-letter code: Cobyric acid synthase (484 aa).

A GATase cobBQ-type domain is found at 253 to 430 (SLRVAVVRFP…WHGAFEHDEF (178 aa)). The active-site Nucleophile is cysteine 334. Residue histidine 422 is part of the active site.

The protein belongs to the CobB/CobQ family. CobQ subfamily.

The protein operates within cofactor biosynthesis; adenosylcobalamin biosynthesis. In terms of biological role, catalyzes amidations at positions B, D, E, and G on adenosylcobyrinic A,C-diamide. NH(2) groups are provided by glutamine, and one molecule of ATP is hydrogenolyzed for each amidation. The polypeptide is Cobyric acid synthase (Cutibacterium acnes (strain DSM 16379 / KPA171202) (Propionibacterium acnes)).